The chain runs to 581 residues: FAD-dependent monooxygenase DEP4 (581 aa).

43 to 46 (VWSK) serves as a coordination point for FAD. Residue 54-56 (FAQ) coordinates NADP(+). Position 108 (Val-108) interacts with FAD. NADP(+) is bound by residues 183-202 (VGRS…EGKR), 219-220 (AP), and 351-352 (DI). Residue Met-470 participates in FAD binding.

It belongs to the FAD-binding monooxygenase family. Requires FAD as cofactor.

It participates in polyketide biosynthesis. In terms of biological role, FAD-dependent monooxygenase; part of the gene cluster that mediates the biosynthesis of depudecin, a highly oxidized eleven-carbon linear polyketide that acts as a histone deacetylase (HDAC) inhibitor and makes a small contribution to pathogenesis. The reducing polyketide synthase DEP5 is the central enzyme in depudecin biosynthesis by yielding the backbone polyketide chain. The monooxygenases DEP2 and DEP4, as well as the uncharacterized protein DEP1, then act as tailoring enzymes to modify the intermediate polyketide chain into depudecin. This chain is FAD-dependent monooxygenase DEP4, found in Alternaria brassicicola (Dark leaf spot agent).